The primary structure comprises 544 residues: Chaperonin GroEL (544 aa).

ATP is bound by residues 29 to 32, 86 to 90, Gly-413, 476 to 478, and Asp-492; these read TLGP, DGTTT, and NAA.

It belongs to the chaperonin (HSP60) family. In terms of assembly, forms a cylinder of 14 subunits composed of two heptameric rings stacked back-to-back. Interacts with the co-chaperonin GroES.

It is found in the cytoplasm. It catalyses the reaction ATP + H2O + a folded polypeptide = ADP + phosphate + an unfolded polypeptide.. Its function is as follows. Together with its co-chaperonin GroES, plays an essential role in assisting protein folding. The GroEL-GroES system forms a nano-cage that allows encapsulation of the non-native substrate proteins and provides a physical environment optimized to promote and accelerate protein folding. The protein is Chaperonin GroEL of Bacillus mycoides (strain KBAB4) (Bacillus weihenstephanensis).